A 406-amino-acid chain; its full sequence is Coenzyme A biosynthesis bifunctional protein CoaBC (406 aa).

Residues 1 to 191 (MLNNRNVLLC…ETSAPLEGKH (191 aa)) form a phosphopantothenoylcysteine decarboxylase region. The active-site Proton donor is Cys-157. The interval 192-406 (VVITAGPTRE…ALSKQTGERS (215 aa)) is phosphopantothenate--cysteine ligase. CTP contacts are provided by Asp-281, Lys-291, Phe-325, Lys-339, and Lys-343.

It in the N-terminal section; belongs to the HFCD (homo-oligomeric flavin containing Cys decarboxylase) superfamily. In the C-terminal section; belongs to the PPC synthetase family. Mg(2+) is required as a cofactor. Requires FMN as cofactor.

It catalyses the reaction N-[(R)-4-phosphopantothenoyl]-L-cysteine + H(+) = (R)-4'-phosphopantetheine + CO2. The enzyme catalyses (R)-4'-phosphopantothenate + L-cysteine + CTP = N-[(R)-4-phosphopantothenoyl]-L-cysteine + CMP + diphosphate + H(+). The protein operates within cofactor biosynthesis; coenzyme A biosynthesis; CoA from (R)-pantothenate: step 2/5. It participates in cofactor biosynthesis; coenzyme A biosynthesis; CoA from (R)-pantothenate: step 3/5. In terms of biological role, catalyzes two sequential steps in the biosynthesis of coenzyme A. In the first step cysteine is conjugated to 4'-phosphopantothenate to form 4-phosphopantothenoylcysteine. In the second step the latter compound is decarboxylated to form 4'-phosphopantotheine. This Bacillus subtilis (strain 168) protein is Coenzyme A biosynthesis bifunctional protein CoaBC.